Consider the following 35-residue polypeptide: Probable protein L3 (35 aa).

This chain is Probable protein L3, found in Odocoileus virginianus papillomavirus 1 (DPV).